The following is a 189-amino-acid chain: Ribonuclease HII (189 aa).

The 189-residue stretch at 1–189 (MIAGVDEAGR…IAALLKNNKK (189 aa)) folds into the RNase H type-2 domain. The a divalent metal cation site is built by Asp6, Glu7, and Asp98.

The protein belongs to the RNase HII family. The cofactor is Mn(2+). Mg(2+) is required as a cofactor.

It localises to the cytoplasm. The enzyme catalyses Endonucleolytic cleavage to 5'-phosphomonoester.. Its function is as follows. Endonuclease that specifically degrades the RNA of RNA-DNA hybrids. The protein is Ribonuclease HII of Dichelobacter nodosus (strain VCS1703A).